A 1486-amino-acid chain; its full sequence is Chromosome partition protein MukB (1486 aa).

ATP is bound at residue 34–41; sequence GGNGAGKS. 3 coiled-coil regions span residues 326–418, 444–480, and 509–603; these read LEAD…QYNQ, LETFQAKELEATEKMLSLEQKMSMAQTAHSQFEQAYQ, and RHLA…RAPV. The interval 666 to 783 is flexible hinge; it reads PGGSEDQRLN…EVPLFGRAAR (118 aa). Coiled coils occupy residues 835 to 923, 977 to 1115, and 1209 to 1266; these read EAEI…AKLE, EMLS…TAKA, and VEAI…QNVS.

The protein belongs to the SMC family. MukB subfamily. In terms of assembly, homodimerization via its hinge domain. Binds to DNA via its C-terminal region. Interacts, and probably forms a ternary complex, with MukE and MukF via its C-terminal region. The complex formation is stimulated by calcium or magnesium. Interacts with tubulin-related protein FtsZ.

The protein localises to the cytoplasm. It localises to the nucleoid. Plays a central role in chromosome condensation, segregation and cell cycle progression. Functions as a homodimer, which is essential for chromosome partition. Involved in negative DNA supercoiling in vivo, and by this means organize and compact chromosomes. May achieve or facilitate chromosome segregation by condensation DNA from both sides of a centrally located replisome during cell division. The polypeptide is Chromosome partition protein MukB (Escherichia coli O81 (strain ED1a)).